Consider the following 512-residue polypeptide: Endo-1,4-beta-xylanase A (512 aa).

An N-terminal signal peptide occupies residues 1–30; it reads MKRKVKKMAAMATSIIMAIMIILHSIPVLA. The GH11 domain maps to 33 to 228; that stretch reads IIYDNETGTH…SSGYANVYKN (196 aa). Glu-124 functions as the Nucleophile in the catalytic mechanism. Glu-215 (proton donor) is an active-site residue. 2 CBM6 domains span residues 251–371 and 388–508; these read SIIE…FIFS and SIIQ…FVFS. Ca(2+)-binding residues include Glu-254 and Glu-256. Thr-271 contributes to the D-xylotriose binding site. Arg-276 contacts Ca(2+). Residues 279-340 form repeat 1; the sequence is GYIENGNTVT…SSTGSWNTYQ (62 aa). Residues 279–477 form a 2 X 61 AA approximate repeats region; sequence GYIENGNTVT…GSTGSFDTYR (199 aa). Residues Tyr-280, Asn-337, and Asn-364 each contribute to the D-xylotriose site. Residues Tyr-280, Asn-337, and Asn-364 each contribute to the D-xylobiose site. The Ca(2+) site is built by Asp-366, Gln-391, Glu-393, and Ser-413. Repeat unit 2 spans residues 416–477; the sequence is GYIENGYSTT…GSTGSFDTYR (62 aa). Positions 417, 474, and 501 each coordinate D-xylotriose. Asp-503 is a Ca(2+) binding site.

Belongs to the glycosyl hydrolase 11 (cellulase G) family.

The enzyme catalyses Endohydrolysis of (1-&gt;4)-beta-D-xylosidic linkages in xylans.. The protein operates within glycan degradation; xylan degradation. The protein is Endo-1,4-beta-xylanase A (xynA) of Thermoclostridium stercorarium (Clostridium stercorarium).